The following is a 245-amino-acid chain: Ribosomal protein L11 methyltransferase (245 aa).

Positions 101, 122, 144, and 184 each coordinate S-adenosyl-L-methionine.

This sequence belongs to the methyltransferase superfamily. PrmA family.

It is found in the cytoplasm. The enzyme catalyses L-lysyl-[protein] + 3 S-adenosyl-L-methionine = N(6),N(6),N(6)-trimethyl-L-lysyl-[protein] + 3 S-adenosyl-L-homocysteine + 3 H(+). Its function is as follows. Methylates ribosomal protein L11. This Aquifex aeolicus (strain VF5) protein is Ribosomal protein L11 methyltransferase.